A 422-amino-acid chain; its full sequence is Enolase (422 aa).

Gln-162 lines the (2R)-2-phosphoglycerate pocket. The active-site Proton donor is Glu-204. Mg(2+) contacts are provided by Asp-241, Glu-284, and Asp-311. 4 residues coordinate (2R)-2-phosphoglycerate: Lys-336, Arg-365, Ser-366, and Lys-387. The active-site Proton acceptor is the Lys-336.

Belongs to the enolase family. The cofactor is Mg(2+).

It is found in the cytoplasm. It localises to the secreted. The protein resides in the cell surface. It catalyses the reaction (2R)-2-phosphoglycerate = phosphoenolpyruvate + H2O. The protein operates within carbohydrate degradation; glycolysis; pyruvate from D-glyceraldehyde 3-phosphate: step 4/5. Catalyzes the reversible conversion of 2-phosphoglycerate (2-PG) into phosphoenolpyruvate (PEP). It is essential for the degradation of carbohydrates via glycolysis. This is Enolase from Bartonella quintana (strain Toulouse) (Rochalimaea quintana).